The primary structure comprises 391 residues: Arginine biosynthesis bifunctional protein ArgJ (391 aa).

Residues Thr149, Lys172, Thr183, Glu263, Asn386, and Ser391 each coordinate substrate. The Nucleophile role is filled by Thr183.

The protein belongs to the ArgJ family. As to quaternary structure, heterotetramer of two alpha and two beta chains.

The protein resides in the cytoplasm. The catalysed reaction is N(2)-acetyl-L-ornithine + L-glutamate = N-acetyl-L-glutamate + L-ornithine. It catalyses the reaction L-glutamate + acetyl-CoA = N-acetyl-L-glutamate + CoA + H(+). Its pathway is amino-acid biosynthesis; L-arginine biosynthesis; L-ornithine and N-acetyl-L-glutamate from L-glutamate and N(2)-acetyl-L-ornithine (cyclic): step 1/1. It participates in amino-acid biosynthesis; L-arginine biosynthesis; N(2)-acetyl-L-ornithine from L-glutamate: step 1/4. Functionally, catalyzes two activities which are involved in the cyclic version of arginine biosynthesis: the synthesis of N-acetylglutamate from glutamate and acetyl-CoA as the acetyl donor, and of ornithine by transacetylation between N(2)-acetylornithine and glutamate. This Bifidobacterium longum (strain NCC 2705) protein is Arginine biosynthesis bifunctional protein ArgJ.